We begin with the raw amino-acid sequence, 170 residues long: Sec-independent protein translocase protein TatB (170 aa).

A helical membrane pass occupies residues methionine 1–glycine 21.

The protein belongs to the TatB family. The Tat system comprises two distinct complexes: a TatABC complex, containing multiple copies of TatA, TatB and TatC subunits, and a separate TatA complex, containing only TatA subunits. Substrates initially bind to the TatABC complex, which probably triggers association of the separate TatA complex to form the active translocon.

Its subcellular location is the cell inner membrane. Part of the twin-arginine translocation (Tat) system that transports large folded proteins containing a characteristic twin-arginine motif in their signal peptide across membranes. Together with TatC, TatB is part of a receptor directly interacting with Tat signal peptides. TatB may form an oligomeric binding site that transiently accommodates folded Tat precursor proteins before their translocation. In Cupriavidus necator (strain ATCC 17699 / DSM 428 / KCTC 22496 / NCIMB 10442 / H16 / Stanier 337) (Ralstonia eutropha), this protein is Sec-independent protein translocase protein TatB.